We begin with the raw amino-acid sequence, 676 residues long: Translation initiation factor IF-2, mitochondrial (676 aa).

The tr-type G domain maps to 143 to 326 (KRAPVVTIMG…MDIRAENSPK (184 aa)). The segment at 152-159 (GHVDHGKT) is G1. 152-159 (GHVDHGKT) contacts GTP. The interval 177 to 181 (GITQH) is G2. Residues 200–203 (DTPG) and 254–257 (TKID) contribute to the GTP site. Residues 200–203 (DTPG) are G3. The tract at residues 254 to 257 (TKID) is G4. The segment at 296–298 (SAK) is G5.

It belongs to the TRAFAC class translation factor GTPase superfamily. Classic translation factor GTPase family. IF-2 subfamily.

It is found in the mitochondrion. One of the essential components for the initiation of protein synthesis. Protects formylmethionyl-tRNA from spontaneous hydrolysis and promotes its binding to the 30S ribosomal subunits. Also involved in the hydrolysis of GTP during the formation of the 70S ribosomal complex. The chain is Translation initiation factor IF-2, mitochondrial (IFM1) from Saccharomyces cerevisiae (strain ATCC 204508 / S288c) (Baker's yeast).